A 480-amino-acid polypeptide reads, in one-letter code: MNYLNETIDSLNDKLKSGAVSADQLAKDTIANIKKTDEKINAFITVDEDAKPAEDLDFNNKLAGVPIAIKDNIITNGLKTTAASHILYNFEPVYESTVVAKLKAAQATIIGKTNMDEFAMGSSTETSYFGDTKNPWNLNKVPGGSSGGSAAAVASGEVVAALGSDTGGSIRQPASFNGIFGIKPTYGRVSRWGLIAFASSLDQIGVMSKRVKDSAEVLNVIAGADDRDATVSEKEVPDYTSFLDKDVKGLRVAVPKEYMSDAVEEGVRKAVEAQIELLRANGAIINEVSLPHTKYVVPTYYIIASSEASANLERYDGIRYGYRAEAKNLDEVFLKSRSEGFGDEVKRRIMLGSFALSAGAYDKFFLQAAKVRTLICQDFDKIFEDNDVIVGPVSTETAFDLNSEISDQIKMYNNDILTISANMAGIPAASVPAGLSETTGMPVGFQIMAKRFDEGHVFQVADFIERSNKFYEQTPAGLED.

Catalysis depends on charge relay system residues lysine 70 and serine 145. The Acyl-ester intermediate role is filled by serine 169.

The protein belongs to the amidase family. GatA subfamily. Heterotrimer of A, B and C subunits.

It carries out the reaction L-glutamyl-tRNA(Gln) + L-glutamine + ATP + H2O = L-glutaminyl-tRNA(Gln) + L-glutamate + ADP + phosphate + H(+). Its function is as follows. Allows the formation of correctly charged Gln-tRNA(Gln) through the transamidation of misacylated Glu-tRNA(Gln) in organisms which lack glutaminyl-tRNA synthetase. The reaction takes place in the presence of glutamine and ATP through an activated gamma-phospho-Glu-tRNA(Gln). This Lactobacillus delbrueckii subsp. bulgaricus (strain ATCC BAA-365 / Lb-18) protein is Glutamyl-tRNA(Gln) amidotransferase subunit A.